The sequence spans 188 residues: Mediator of RNA polymerase II transcription subunit 29 (188 aa).

Low complexity-rich tracts occupy residues 1–23 (MNPN…QSSP) and 30–43 (VQHQ…PLQQ). Positions 1 to 43 (MNPNMNMMPMSGPQMMQVMQSSPSGPPGPVQHQQQQPPQPLQQ) are disordered.

The protein belongs to the Mediator complex subunit 29 family. As to quaternary structure, component of the Mediator complex. Self-associates. Interacts with dsx.

The protein localises to the nucleus. In terms of biological role, component of the Mediator complex, a coactivator involved in the regulated transcription of nearly all RNA polymerase II-dependent genes. Mediator functions as a bridge to convey information from gene-specific regulatory proteins to the basal RNA polymerase II transcription machinery. Mediator is recruited to promoters by direct interactions with regulatory proteins and serves as a scaffold for the assembly of a functional preinitiation complex with RNA polymerase II and the general transcription factors. Required for female somatic sexual development. The chain is Mediator of RNA polymerase II transcription subunit 29 (ix) from Drosophila melanogaster (Fruit fly).